The chain runs to 413 residues: Protein trichome birefringence-like 31 (413 aa).

A helical; Signal-anchor for type II membrane protein transmembrane segment spans residues 12 to 34 (IQSIFQVVLVSLLVLGSVRWILD). The GDS motif motif lies at 141-143 (GDS). The DCXHWCLPGXXDXWN motif signature appears at 384-398 (DCIHWCLPGVPDTWN).

It belongs to the PC-esterase family. TBL subfamily.

Its subcellular location is the membrane. In terms of biological role, may act as a bridging protein that binds pectin and other cell wall polysaccharides. Probably involved in maintaining esterification of pectins. May be involved in the specific O-acetylation of cell wall polymers. This Arabidopsis thaliana (Mouse-ear cress) protein is Protein trichome birefringence-like 31 (TBL31).